We begin with the raw amino-acid sequence, 215 residues long: Heart- and neural crest derivatives-expressed protein 1 (215 aa).

Disordered regions lie at residues 53–109 and 166–198; these read APDF…RTES and LKKA…EKRI. Over residues 65–89 the composition is skewed to low complexity; that stretch reads AAAAATAYGPDARPGQSPGRLEALG. Over residues 92–104 the composition is skewed to basic residues; it reads LGRRKGSGPKKER. The bHLH domain occupies 94-146; the sequence is RRKGSGPKKERRRTESINSAFAELRECIPNVPADTKLSKIKTLRLATSYIAYL. Threonine 107 carries the phosphothreonine; by PLK4 modification. At serine 109 the chain carries Phosphoserine; by PLK4.

In terms of assembly, efficient DNA binding requires dimerization with another bHLH protein. Forms homodimers and heterodimers with TCF3 gene products E12 and E47, HAND2 and HEY1, HEY2 and HEYL (hairy-related transcription factors). Interacts with MDFIC. Interacts with SOX15; the interaction enhances HAND1-induced differentiation of trophoblast giant cells. In terms of processing, phosphorylation by PLK4 disrupts the interaction with MDFIC and leads to translocation into the nucleoplasm, allowing dimerization and transcription factor activity. In terms of tissue distribution, heart.

It is found in the nucleus. The protein resides in the nucleoplasm. It localises to the nucleolus. In terms of biological role, transcription factor that plays an essential role in both trophoblast giant cell differentiation and in cardiac morphogenesis. Binds the DNA sequence 5'-NRTCTG-3' (non-canonical E-box). Acts as a transcriptional repressor of SOX15. In the adult, could be required for ongoing expression of cardiac-specific genes. The polypeptide is Heart- and neural crest derivatives-expressed protein 1 (HAND1) (Homo sapiens (Human)).